A 234-amino-acid polypeptide reads, in one-letter code: Venom allergen 3 (234 aa).

An N-terminal signal peptide occupies residues 1–22; sequence MELIVSILWLAITAENLANTLA. 4 disulfides stabilise this stretch: Cys26-Cys41, Cys31-Cys125, Cys52-Cys118, and Cys198-Cys216. The region spanning 69–218 is the SCP domain; that stretch reads VNKHNELRQR…WTKHYLVCNY (150 aa). The segment at 80-99 is disordered; sequence ASGKEMRGTNGPQPPAVKMP.

Belongs to the CRISP family. In terms of tissue distribution, expressed by the venom gland.

It is found in the secreted. This Solenopsis invicta (Red imported fire ant) protein is Venom allergen 3.